The chain runs to 182 residues: Bifunctional protein PyrR (182 aa).

The PRPP-binding motif lies at 99–111; it reads IVLVDDVLFTGRT.

This sequence belongs to the purine/pyrimidine phosphoribosyltransferase family. PyrR subfamily. As to quaternary structure, homodimer and homohexamer; in equilibrium.

The catalysed reaction is UMP + diphosphate = 5-phospho-alpha-D-ribose 1-diphosphate + uracil. In terms of biological role, regulates transcriptional attenuation of the pyrimidine nucleotide (pyr) operon by binding in a uridine-dependent manner to specific sites on pyr mRNA. This disrupts an antiterminator hairpin in the RNA and favors formation of a downstream transcription terminator, leading to a reduced expression of downstream genes. Functionally, also displays a weak uracil phosphoribosyltransferase activity which is not physiologically significant. In Caldicellulosiruptor bescii (strain ATCC BAA-1888 / DSM 6725 / KCTC 15123 / Z-1320) (Anaerocellum thermophilum), this protein is Bifunctional protein PyrR.